Here is a 624-residue protein sequence, read N- to C-terminus: (-)-beta-phellandrene synthase 2, chloroplastic (624 aa).

A chloroplast-targeting transit peptide spans 1–47 (MALVSVAPLVSMRRSLFSSPYELKSIDKTIPNLVMCRKRMLGRPSIR). Mg(2+) contacts are provided by D375, D379, and D527. Residues 375–379 (DDIYD) carry the DDXXD motif motif.

This sequence belongs to the terpene synthase family. Tpsd subfamily. Requires Mg(2+) as cofactor. Mn(2+) serves as cofactor.

It is found in the plastid. It localises to the chloroplast. The catalysed reaction is (2E)-geranyl diphosphate = (-)-beta-phellandrene + diphosphate. The protein operates within terpene metabolism; oleoresin biosynthesis. It functions in the pathway secondary metabolite biosynthesis; terpenoid biosynthesis. Monoterpene synthase (TPS) involved in the biosynthesis of monoterpene natural products included in conifer oleoresin secretions and volatile emissions; these compounds contribute to biotic and abiotic stress defense against herbivores and pathogens. Catalyzes the conversion of (2E)-geranyl diphosphate (GPP) to (-)-beta-phellandrene. The chain is (-)-beta-phellandrene synthase 2, chloroplastic from Pinus contorta (Shore pine).